Here is a 928-residue protein sequence, read N- to C-terminus: MDGTDALEKLTKGLSGGGGSLHQTKLLMEFQLRGLPVPALLNSSTTEQFLNTVAQLPTDLSKFIRDYRVFALVRAAYFLEPPSSIDPLEAARALGRLVDILSSQPPQNTAPAQPPTSDDTLNNCTLLKLLAHYADQIAGFKTPALPPVPPGIIGLFTCVEQMYHACFQKYWAAALPPMWILTYDPPTSPLQDWLIVAYGNKEGLLLPSGIPSEEVLAKTLVTEHHELFVSRSNSTETAVTMPVSKERALAIYRVFAKGEVVAENTPILAFTDVELSTLKPHYLFIYDFIIEALCKSYTYSCTQARLESFLSRGIDFMTDLGQYLDTATSGKQQLTHSQIKEIKYRLLSCGLSASACDVFRTVIMTLPYRPTPNLANLSTFMGMVHQLTMFGHYFYRCLGSYSPTGLAFTELQKILTRASAEQTERNPWRHPGISDIPLRWKISRALAFFVPPAPINTLQRVYAALPSQLMRAIFEISVKTTWGGAVPANLARDIDTGPNTQHISSTPPPTLKDVETYCQGLRVGDTEYDEDIVRSPLFADAFTKSHLLPILREVLENRLQKNRALFQIRWLIIFAAEAATGLIPARRPLARAYFHIMDILEERHSQDALYNLLDCIQELFTHIRQAVPDAQCPHAFLQSLFVFQFRPFVLKHQQGVTLFLDGLQTSLPPVISLANLGDKLCRLEFEYDSEGDFVRVPVAPPEQPPHVHLSHFKKTIQTIEQATREATVAMTTIAKPIYPAYIRLLQRLEYLNRLNHHILRIPFPQDALSELQETYLAAFARLTKLAADAANTCSYSLTKYFGVLFQHQLVPTAIVKKLLHFDEAKDTTEAFLQSLAQPVVQGQRQGAAGGSGVLTQKELELLNKINPQFTDAQANIPPSIKRSYSNKYDVPEVSVDWETYSRSAFEAPDDELRFVPLTLAGLRKLFVE.

The interaction with large tegument protein stretch occupies residues 482–928 (WGGAVPANLA…LAGLRKLFVE (447 aa)).

Belongs to the herpesviridae inner tegument protein family. Interacts (via C-terminus) with the large tegument protein/LTP (via N-terminus).

Its subcellular location is the virion tegument. It is found in the host cytoplasm. It localises to the host nucleus. The protein localises to the host Golgi apparatus. The protein resides in the host trans-Golgi network. Plays an essential role in cytoplasmic secondary envelopment during viral egress. Interacts with the capsid via the large tegument protein/LTP and participates in its transport to the host trans-Golgi network (TGN) where secondary envelopment occurs. Modulates tegumentation and capsid accumulation at the viral assembly complex. In Homo sapiens (Human), this protein is Inner tegument protein (ORF63).